We begin with the raw amino-acid sequence, 417 residues long: L-rhamnose isomerase (417 aa).

The Mn(2+) site is built by histidine 261, aspartate 293, and aspartate 295.

The protein belongs to the rhamnose isomerase family. Requires Mn(2+) as cofactor.

It is found in the cytoplasm. It carries out the reaction L-rhamnopyranose = L-rhamnulose. It participates in carbohydrate degradation; L-rhamnose degradation; glycerone phosphate from L-rhamnose: step 1/3. Functionally, catalyzes the interconversion of L-rhamnose and L-rhamnulose. The sequence is that of L-rhamnose isomerase from Oceanobacillus iheyensis (strain DSM 14371 / CIP 107618 / JCM 11309 / KCTC 3954 / HTE831).